The sequence spans 780 residues: TSC22 domain family protein 2 (780 aa).

Disordered stretches follow at residues 20 to 86, 126 to 158, 235 to 499, 587 to 607, and 736 to 780; these read AQVA…TVSP, TSAP…PTTC, AHGP…PGGP, LVGQ…PPLS, and LSSN…VSSA. Residues 28–37 show a composition bias toward acidic residues; the sequence is EDTESLDDPD. The span at 126-146 shows a compositional bias: low complexity; the sequence is TSAPAPGAPGGPQLAGSSAGP. The segment covering 241–262 has biased composition (polar residues); sequence GTDSSLTAVSQLPPSEKMSQPT. Low complexity-rich tracts occupy residues 297–316, 344–361, and 395–412; these read GAAT…QPQG, PAVG…AYPQ, and QPSS…ATLP. Over residues 415-434 the composition is skewed to polar residues; the sequence is TGQNASSVGAQLMGASSQPS. Residues 453–468 show a composition bias toward low complexity; that stretch reads QPTGVPPATVGGVVQP. Over residues 736–756 the composition is skewed to polar residues; that stretch reads LSSNDQLSQLPTQQANPGSTS. Over residues 765–774 the composition is skewed to pro residues; sequence PPQPTQPPQQ.

Belongs to the TSC-22/Dip/Bun family. Interacts with NRBP1. Interacts with PKM isoform M2; the interaction results in reduced nuclear levels of PKM isoform M2, leading to repression of cyclin CCND1 transcription and reduced cell growth. Interacts with WDR77.

Reduces the level of nuclear PKM isoform M2 which results in repression of cyclin CCND1 transcription and reduced cell growth. This Homo sapiens (Human) protein is TSC22 domain family protein 2.